A 204-amino-acid chain; its full sequence is RNA-free ribonuclease P (204 aa).

It belongs to the HARP family.

The catalysed reaction is Endonucleolytic cleavage of RNA, removing 5'-extranucleotides from tRNA precursor.. RNA-free RNase P that catalyzes the removal of the 5'-leader sequence from pre-tRNA to produce the mature 5'-terminus. The chain is RNA-free ribonuclease P from Pyrococcus horikoshii (strain ATCC 700860 / DSM 12428 / JCM 9974 / NBRC 100139 / OT-3).